Consider the following 173-residue polypeptide: Large ribosomal subunit protein uL10 (173 aa).

Belongs to the universal ribosomal protein uL10 family. Part of the ribosomal stalk of the 50S ribosomal subunit. The N-terminus interacts with L11 and the large rRNA to form the base of the stalk. The C-terminus forms an elongated spine to which L12 dimers bind in a sequential fashion forming a multimeric L10(L12)X complex.

Its function is as follows. Forms part of the ribosomal stalk, playing a central role in the interaction of the ribosome with GTP-bound translation factors. The polypeptide is Large ribosomal subunit protein uL10 (Thiobacillus denitrificans (strain ATCC 25259 / T1)).